The sequence spans 297 residues: Putative peptidyl-prolyl cis-trans isomerase YacD (297 aa).

Residues 1–32 (MKSRTIWTIILGALLVCCIAVAYTLTKSQAGA) form the signal peptide. Residues 154 to 247 (DDSYRIRHIV…NGYAIIQLKE (94 aa)) form the PpiC domain.

The catalysed reaction is [protein]-peptidylproline (omega=180) = [protein]-peptidylproline (omega=0). This Bacillus subtilis (strain 168) protein is Putative peptidyl-prolyl cis-trans isomerase YacD (yacD).